A 428-amino-acid polypeptide reads, in one-letter code: Putative G-protein coupled receptor F59B2.13 (428 aa).

Over 1-30 (MSNNTTIPSKTATDICLTDRQMSLSVSSTE) the chain is Extracellular. Residues Asn3 and Asn4 are each glycosylated (N-linked (GlcNAc...) asparagine). The chain crosses the membrane as a helical span at residues 31-51 (GVLIGTIIPILVLFGISGNIL). Residues 52 to 67 (NLTVLLAPNLRTRSNQ) lie on the Cytoplasmic side of the membrane. The helical transmembrane segment at 68–88 (LLACLAVADIVSLVVILPHSM) threads the bilayer. Residues 89-110 (AHYETFETALWFRKFYGKYKFQ) are Extracellular-facing. Residues 111 to 131 (IIAMTNWSIATATWLVFVICL) form a helical membrane-spanning segment. Topologically, residues 132–154 (ERLIIIKYPLSVRKQAKFFTPRN) are cytoplasmic. A helical membrane pass occupies residues 155 to 175 (VVTIIVVTTFILTSYNHVSHA). Over 176-222 (CAEKLFCNGTQYHVACLGIDSERWFRNEPNPNSEFMKSVVRVAPQVN) the chain is Extracellular. Asn183 carries N-linked (GlcNAc...) asparagine glycosylation. Residues 223-243 (AIFVVLIPVVLVIIFNVMLIL) form a helical membrane-spanning segment. The Cytoplasmic portion of the chain corresponds to 244–278 (TLRQRTKLFEPSKTIRGDSQFTQLQSKTEHKVTIT). A helical transmembrane segment spans residues 279–299 (VTAIVTCFTITQSPSAFVTFL). At 300-309 (SSYVHRDWVT) the chain is on the extracellular side. The chain crosses the membrane as a helical span at residues 310–330 (LSAICTILVVLGKALNFVLFC). Residues 331–428 (LSSASFRQRL…KEFRRGTSFV (98 aa)) lie on the Cytoplasmic side of the membrane.

The protein belongs to the G-protein coupled receptor 1 family.

It is found in the cell membrane. The polypeptide is Putative G-protein coupled receptor F59B2.13 (Caenorhabditis elegans).